Consider the following 715-residue polypeptide: Lanosterol synthase erg7B (715 aa).

A PFTB 1 repeat occupies 111-153 (AIEIKNYLMARANPVDGGWGLHSEGDSSVFGTSLNYTVLRLLG). D445 serves as the catalytic Proton donor. PFTB repeat units lie at residues 550-590 (IQRG…RSAG) and 599-640 (VRRG…VVQT).

It belongs to the terpene cyclase/mutase family.

It is found in the lipid droplet. The protein localises to the endoplasmic reticulum membrane. It carries out the reaction (S)-2,3-epoxysqualene = lanosterol. It participates in steroid metabolism; ergosterol biosynthesis. Functionally, lanosterol synthase; part of the third module of ergosterol biosynthesis pathway that includes the late steps of the pathway. ERG7A and ERG7B catalyze the cyclization of (S)-2,3 oxidosqualene to lanosterol, a reaction that forms the sterol core. The third module or late pathway involves the ergosterol synthesis itself through consecutive reactions that mainly occur in the endoplasmic reticulum (ER) membrane. Firstly, the squalene synthase erg9 catalyzes the condensation of 2 farnesyl pyrophosphate moieties to form squalene, which is the precursor of all steroids. Squalene synthase is crucial for balancing the incorporation of farnesyl diphosphate (FPP) into sterol and nonsterol isoprene synthesis. Secondly, squalene is converted into lanosterol by the consecutive action of the squalene epoxidase erg1 and the lanosterol synthase erg7. Then, the delta(24)-sterol C-methyltransferase erg6 methylates lanosterol at C-24 to produce eburicol. Eburicol is the substrate of the sterol 14-alpha demethylase encoded by cyp51A and cyp51B, to yield 4,4,24-trimethyl ergosta-8,14,24(28)-trienol. The C-14 reductase erg24 then reduces the C14=C15 double bond which leads to 4,4-dimethylfecosterol. A sequence of further demethylations at C-4, involving the C-4 demethylation complex containing the C-4 methylsterol oxidases erg25A or erg25B, the sterol-4-alpha-carboxylate 3-dehydrogenase erg26 and the 3-keto-steroid reductase erg27, leads to the production of fecosterol via 4-methylfecosterol. The C-8 sterol isomerase erg2 then catalyzes the reaction which results in unsaturation at C-7 in the B ring of sterols and thus converts fecosterol to episterol. The sterol-C5-desaturase erg3B then catalyzes the introduction of a C-5 double bond in the B ring to produce 5-dehydroepisterol. The 2 other sterol-C5-desaturases, erg3A and erg3C, seem to be less important in ergosterol biosynthesis. The C-22 sterol desaturase erg5 further converts 5-dehydroepisterol into ergosta-5,7,22,24(28)-tetraen-3beta-ol by forming the C-22(23) double bond in the sterol side chain. Finally, ergosta-5,7,22,24(28)-tetraen-3beta-ol is substrate of the C-24(28) sterol reductases erg4A and erg4B to produce ergosterol. Possible alternative sterol biosynthetic pathways might exist from fecosterol to ergosterol, depending on the activities of the erg3 isoforms. This Aspergillus fumigatus (strain ATCC MYA-4609 / CBS 101355 / FGSC A1100 / Af293) (Neosartorya fumigata) protein is Lanosterol synthase erg7B.